The chain runs to 560 residues: DNA ligase B (560 aa).

Lysine 124 (N6-AMP-lysine intermediate) is an active-site residue.

The protein belongs to the NAD-dependent DNA ligase family. LigB subfamily.

The enzyme catalyses NAD(+) + (deoxyribonucleotide)n-3'-hydroxyl + 5'-phospho-(deoxyribonucleotide)m = (deoxyribonucleotide)n+m + AMP + beta-nicotinamide D-nucleotide.. In terms of biological role, catalyzes the formation of phosphodiester linkages between 5'-phosphoryl and 3'-hydroxyl groups in double-stranded DNA using NAD as a coenzyme and as the energy source for the reaction. The protein is DNA ligase B of Escherichia coli O6:K15:H31 (strain 536 / UPEC).